A 256-amino-acid polypeptide reads, in one-letter code: uncharacterized protein (256 aa).

6 helical membrane passes run 6–26, 29–49, 61–81, 145–165, 175–195, and 218–238; these read TSFI…VSFL, LALV…GTFI, ISGT…GLYF, IIGC…TGIA, YYFK…IWLI, and IGWL…AIQF.

The protein belongs to the DedA family.

Its subcellular location is the cell membrane. This is an uncharacterized protein from Buchnera aphidicola subsp. Acyrthosiphon pisum (strain APS) (Acyrthosiphon pisum symbiotic bacterium).